The chain runs to 4116 residues: MGATGRLELTLAAPPHPGPAFQRSKARETQGEEEGSEMQIAKSDSIHHMSHSQGQPELPPLPASANEEPSGLYQTVMSHSFYPPLMQRTSWTLAAPFKEQHHHRGPSDSIANNYSLMAQDLKLKDLLKVYQPATISVPRDRTGQGLPSSGNRSSSEPMRKKTKFSSRNKEDSTRIKLAFKTSIFSPMKKEVKTSLTFPGSRPMSPEQQLDVMLQQEMEMESKEKKPSESDLERYYYYLTNGIRKDMIAPEEGEVMVRISKLISNTLLTSPFLEPLMVVLVQEKENDYYCSLMKSIVDYILMDPMERKRLFIESIPRLFPQRVIRAPVPWHSVYRSAKKWNEEHLHTVNPMMLRLKELWFAEFRDLRFVRTAEILAGKLPLQPQEFWDVIQKHCLEAHQTLLNKWIPTCAQLFTSRKEHWIHFAPKSNYDSSRNIEEYFASVASFMSLQLRELVIKSLEDLVSLFMIHKDGNDFKEPYQEMKFFIPQLIMIKLEVSEPIIVFNPSFDGCWELIRDSFLEIIKNSNGIPKLKYIPLKFSFTAAAADRQCVKAAEPGEPSMHAAATAMAELKGYNLLLGTVNAEEKLVSDFLIQTFKVFQKNQVGPCKYLNVYKKYVDLLDNTAEQNIAAFLKENHDIDDFVTKINAIKKRRNEIASMNITVPLAMFCLDATALNHDLCERAQNLKDHLIQFQVDVNRDTNTSICNQYSHIADKVSEVPANTKELVSLIEFLKKSSAVTVFKLRRQLRDASERLEFLMDYADLPYQIEDIFDNSRNLLLHKRDQAEMDLIKRCSEFELRLEGYHRELESFRKREVMTTEEMKHNVEKLNELSKNLNRAFAEFELINKEEELLEKEKSTYPLLQAMLKNKVPYEQLWSTAYEFSIKSEEWMNGPLFLLNAEQIAEEIGNMWRTTYKLIKTLSDVPAPRRLAENVKIKIDKFKQYIPILSISCNPGMKDRHWQQISEIVGYEIKPTETTCLSNMLEFGFGKFVEKLEPIGAAASKEYSLEKNLDRMKLDWVNVTFSFVKYRDTDTNILCAIDDIQMLLDDHVIKTQTMCGSPFIKPIEAECRKWEEKLIRIQDNLDAWLKCQATWLYLEPIFSSEDIIAQMPEEGRKFGIVDSYWKSLMSQAVKDNRILVAADQPRMAEKLQEANFLLEDIQKGLNDYLEKKRLFFPRFFFLSNDELLEILSETKDPLRVQPHLKKCFEGIAKLEFTDNLEIVGMISSEKETVPFIQKIYPANAKGMVEKWLQQVEQMMLASMREVIGLGIEAYVKVPRNHWVLQWPGQVVICVSSIFWTQEVSQALAENTLLDFLKKSNDQIAQIVQLVRGKLSSGARLTLGALTVIDVHARDVVAKLSEDRVSDLNDFQWISQLRYYWVAKDVQVQIITTEALYGYEYLGNSPRLVITPLTDRCYRTLMGALKLNLGGAPEGPAGTGKTETTKDLAKALAKQCVVFNCSDGLDYKAMGKFFKGLAQAGAWACFDEFNRIEVEVLSVVAQQILSIQQAIIRKLKTFIFEGTELSLNPTCAVFITMNPGYAGRAELPDNLKALFRTVAMMVPDYALIGEISLYSMGFLDSRSLAQKIVATYRLCSEQLSSQHHYDYGMRAVKSVLTAAGNLKLKYPEENESVLLLRALLDVNLAKFLAQDVPLFQGIISDLFPGVVLPKPDYEVFLKVLNDNIKKMKLQPVPWFIGKIIQIYEMMLVRHGYMIVGDPMGGKTSAYKVLAAALGDLHAANQMEEFAVEYKIINPKAITMGQLYGCFDQVSHEWMDGVLANAFREQASSLSDDRKWIIFDGPVDAIWIENMNTVLDDNKKLCLMSGEIIQMNSKMSLIFEPADLEQASPATVSRCGMIYMEPHQLGWKPLKDSYMDTLPSSLTKEHKELVNDMFMWLVQPCLEFGRLHCKFVVQTSPIHLAFSMMRLYSSLLDEIRAVEEEEMELGEGLSSQQIFLWLQGLFLFSLVWTVAGTINADSRKKFDVFFRNLIMGMDDNHPRPKSVKLTKNNIFPERGSIYDFYFIKQASGHWETWTQYITKEEEKVPAGAKVSELIIPTMETARQSFFLKTYLDHEIPMLFVGPTGTGKSAITNNFLLHLPKNTYLPNCINFSARTSANQTQDIIMSKLDRRRKGLFGPPIGKKAVVFVDDLNMPAKEVYGAQPPIELLRQWIDHGYWFDKKDTTRLDIVDMLLVTAMGPPGGGRNDITGRFTRHLNIISINAFEDDILTKIFSSIVDWHFGKGFDVMFLRYGKMLVQATKTIYRDAVENFLPTPSKSHYVFNLRDFSRVIQGVLLCPHTHLQDVEKCIRLWIHEVYRVFYDRLIDKEDRQVFFNMVKETTSNCFKQTIEKVLIHLSPTGKIVDDNIRSLFFGDYFKPESDQKIYDEITDLKQLTVVMEHYLEEFNNISKAPMSLVMFRFAIEHISRICRVLKQDKGHLLLVGIGGSGRQSAAKLSTFMNAYELYQIEITKNYAGNDWREDLKKIILQVGVATKSTVFLFADNQIKDESFVEDINMLLNTGDVPNIFPADEKADIVEKMQTAARTQGEKVEVTPLSMYNFFIERVINKISFSLAMSPIGDAFRNRLRMFPSLINCCTIDWFQSWPTDALELVANKFLEDVELDDNIRVEVVSMCKYFQESVKKLSLDYYNKLRRHNYVTPTSYLELILTFKTLLNSKRQEVAMMRNRYLTGLQKLDFAASQVAVMQRELTALQPQLILTSEETAKMMVKIEAETREADGKKLLVQADEKEANVAAAIAQGIKNECEGDLAEAMPALEAALAALDTLNPADISLVKSMQNPPGPVKLVMESICIMKGMKPERKPDPSGSGKMIEDYWGVSKKILGDLKFLESLKTYDKDNIPPLTMKRIRERFINHPEFQPAVIKNVSSACEGLCKWVRAMEVYDRVAKVVAPKRERLREAEGKLAAQMQKLNQKRAELKLVVDRLQALNDDFEEMNTKKKDLEENIEICSQKLVRAEKLISGLGGEKDRWTEAARQLGIRYTNLTGDVLLSSGTVAYLGAFTVDYRVQCQNQWLAECKDKVIPGFSDFSLSHTLGDPIKIRAWQIAGLPVDSFSIDNGIIVSNSRRWALMIDPHGQANKWIKNMEKANKLAVIKFSDSNYMRMLENALQLGTPVLIENIGEELDASIEPILLKATFKQQGVEYMRLGENIIEYSRDFKLYITTRLRNPHYLPEVAVKVCLLNFMITPLGLQDQLLGIVAAKEKPELEEKKNQLIVESAKNKKHLKEIEDKILEVLSMSKGNILEDETAIKVLSSSKVLSEEISEKQKVASMTETQIDETRMGYKPVAVHSATIFFCISDLANIEPMYQYSLTWFINLYMHSLTHSTKSEELNLRIKYIIDHFTLSIYNNVCRSLFEKDKLLFSLLLTIGIMKQKKEITEEVWYFLLTGGIALDNPYPNPAPQWLSEKAWAEIVRASALPKLHGLMEHLEQNLGEWKLIYDSAWPHEEQLPGSWKFSQGLEKMVILRCLRPDKMVPAVREFIAEHMGKLYIEAPTFDLQGSYNDSSCCAPLIFVLSPSADPMAGLLKFADDLGMGGTRTQTISLGQGQGPIAAKMINNAIKDGTWVVLQNCHLAASWMPTLEKICEEVIVPESTNARFRLWLTSYPSEKFPVSILQNGIKMTNEPPKGLRANLLRSYLNDPISDPVFFQSCAKAVMWQKMLFGLCFFHAVVQERRNFGPLGWNIPYEFNESDLRISMWQIQMFLNDYKEVPFDALTYLTGECNYGGRVTDDKDRRLLLSLLSMFYCKEIEEDYYSLAPGDTYYIPPHGSYQSYIDYLRNLPITAHPEVFGLHENADITKDNQETNQLFEGVLLTLPRQSGGSGKSPQEVVEELAQDILSKLPRDFDLEEVMKLYPVVYEESMNTVLRQELIRFNRLTKVVRRSLINLGRAIKGQVLMSSELEEVFNSMLVGKVPAMWAAKSYPSLKPLGGYVADLLARLTFFQEWIDKGPPVVFWISGFYFTQSFLTGVSQNYARKYTIPIDHIGFEFEVTPQETVMENNPEDGAYIKGLFLEGARWDRKTMQIGESLPKILYDPLPIIWLKPGESAMFLHQDIYVCPVYKTSARRGTLSTTGHSTNYVLSIELPTDMPQKHWINRGVASLCQLDN.

Disordered stretches follow at residues 1–68 (MGAT…ANEE) and 137–172 (VPRD…KEDS). The segment at 1–1390 (MGATGRLELT…QVQIITTEAL (1390 aa)) is stem. Residues 145–156 (GLPSSGNRSSSE) are compositionally biased toward polar residues. Positions 785 to 852 (DLIKRCSEFE…NKEEELLEKE (68 aa)) form a coiled coil. AAA stretches follow at residues 1391-1612 (YGYE…VLTA), 1672-1903 (KVLN…LHCK), 2036-2284 (KVPA…VIQG), and 2395-2646 (EFNN…LRRH). Residues 1429-1436 (GPAGTGKT), 1710-1717 (GDPMGGKT), 2074-2081 (GPTGTGKS), and 2434-2441 (GIGGSGRQ) contribute to the ATP site. Residues 2661–2960 (FKTLLNSKRQ…KDLEENIEIC (300 aa)) are stalk. AAA stretches follow at residues 3045–3275 (LGDP…EISE) and 3488–3712 (VREF…QIQM).

It belongs to the dynein heavy chain family. In terms of assembly, consists of at least two heavy chains and a number of intermediate and light chains. In terms of tissue distribution, expressed primarily in trachea and testis, 2 tissues containing axonemal structures. Also expressed in lung.

Its subcellular location is the cytoplasm. The protein localises to the cytoskeleton. It is found in the cilium axoneme. Its function is as follows. Force generating protein of respiratory cilia. Produces force towards the minus ends of microtubules. Dynein has ATPase activity; the force-producing power stroke is thought to occur on release of ADP. Involved in sperm motility; implicated in sperm flagellar assembly. This is Dynein axonemal heavy chain 3 (DNAH3) from Homo sapiens (Human).